Consider the following 377-residue polypeptide: MNKEQLKTPFFMIDEAKLIQNLEIAKQLKEISGVKLVLALKCFSTWGVFDIIKPYLDGTTSSGPFEVKLGYEKFGGETHAYSVGYSEDDVREVADLCDKIIFNSQSQLAAHRHIVEGKASIGLRLNPGVSYASQDLANPARQFSRLGVQADHIDPAVFDSINGVMFHMNCENKDVDAFIALLDSISERFGAYLNKLDWVSMGGGVFFTWPGYDVEKLGLALKAFSEKHGVQMYLEPGEAIITKTTDLVVTVVDLVENGMKTAIVDSATEAHRLDTLIYKEPASVLEASENGEHEYVIGSCSCLAGDQFCVAKFDQPLHVGQRLHILDSAGYTMVKLNWFNGLKMPSVYCERTNGEIQKLNEFGYEDFKRSLSLWSVQ.

Residue lysine 41 is modified to N6-(pyridoxal phosphate)lysine. Glutamate 238 and aspartate 274 together coordinate substrate.

The protein belongs to the Orn/Lys/Arg decarboxylase class-II family. NspC subfamily. In terms of assembly, homodimer. Requires pyridoxal 5'-phosphate as cofactor.

Its subcellular location is the cytoplasm. The catalysed reaction is carboxynorspermidine + H(+) = norspermidine + CO2. It carries out the reaction carboxyspermidine + H(+) = spermidine + CO2. Its function is as follows. Catalyzes the decarboxylation of carboxynorspermidine and carboxyspermidine. Carboxynorspermidine is decarboxylated 20-fold more efficiently than carboxyspermidine. Exhibits some activity with L-ornithine, but shows no activity with L-arginine, L-lysine or meso-diaminopimelate. This Vibrio vulnificus (strain CMCP6) protein is Carboxynorspermidine/carboxyspermidine decarboxylase.